The sequence spans 222 residues: uncharacterized protein (222 aa).

The tract at residues 142-222 (ARRGGCVHPP…LPDPPSAGHL (81 aa)) is disordered. Low complexity predominate over residues 160–169 (QSRSISSRRA). Residues 182–196 (PRRRPHRHRTRPQTR) show a composition bias toward basic residues.

The protein belongs to the Rv1128c/1148c/1588c/1702c/1945/3466 family.

This is an uncharacterized protein from Mycobacterium tuberculosis (strain CDC 1551 / Oshkosh).